Consider the following 150-residue polypeptide: FAD synthase (150 aa).

ATP contacts are provided by residues 8–9, 13–16, Asp-95, and His-122; these read AF and HPGH.

The protein belongs to the archaeal FAD synthase family. In terms of assembly, homodimer. A divalent metal cation is required as a cofactor.

It carries out the reaction FMN + ATP + H(+) = FAD + diphosphate. It functions in the pathway cofactor biosynthesis; FAD biosynthesis; FAD from FMN: step 1/1. In terms of biological role, catalyzes the transfer of the AMP portion of ATP to flavin mononucleotide (FMN) to produce flavin adenine dinucleotide (FAD) coenzyme. This is FAD synthase from Methanobrevibacter ruminantium (strain ATCC 35063 / DSM 1093 / JCM 13430 / OCM 146 / M1) (Methanobacterium ruminantium).